The primary structure comprises 310 residues: L-lactate dehydrogenase (310 aa).

Residues V11, D32, Y62, and 76 to 77 (GV) contribute to the NAD(+) site. Substrate is bound by residues Q79, R85, and 117–120 (NPVD). NAD(+) is bound by residues 115–117 (ATN) and S140. 145-148 (DTAR) provides a ligand contact to substrate. Beta-D-fructose 1,6-bisphosphate contacts are provided by R150 and H165. H172 acts as the Proton acceptor in catalysis. The residue at position 218 (Y218) is a Phosphotyrosine. Position 227 (T227) interacts with substrate.

It belongs to the LDH/MDH superfamily. LDH family. In terms of assembly, homotetramer.

Its subcellular location is the cytoplasm. It carries out the reaction (S)-lactate + NAD(+) = pyruvate + NADH + H(+). It participates in fermentation; pyruvate fermentation to lactate; (S)-lactate from pyruvate: step 1/1. Activated by citrate at pH 5. Allosterically activated by fructose 1,6-bisphosphate (FBP) at pH from 5.8 to 7.2. Catalyzes the conversion of lactate to pyruvate. This is L-lactate dehydrogenase from Thermus aquaticus.